Reading from the N-terminus, the 313-residue chain is LUC7-related splicing factor homolog (313 aa).

The disordered stretch occupies residues 237 to 313; it reads RKEREEKLGS…RDRRDRDRRY (77 aa).

This sequence belongs to the Luc7 family.

The polypeptide is LUC7-related splicing factor homolog (Caenorhabditis elegans).